The primary structure comprises 493 residues: Proline--tRNA ligase (493 aa).

It belongs to the class-II aminoacyl-tRNA synthetase family. ProS type 3 subfamily. As to quaternary structure, homodimer.

The protein resides in the cytoplasm. The enzyme catalyses tRNA(Pro) + L-proline + ATP = L-prolyl-tRNA(Pro) + AMP + diphosphate. Its function is as follows. Catalyzes the attachment of proline to tRNA(Pro) in a two-step reaction: proline is first activated by ATP to form Pro-AMP and then transferred to the acceptor end of tRNA(Pro). The sequence is that of Proline--tRNA ligase from Parabacteroides distasonis (strain ATCC 8503 / DSM 20701 / CIP 104284 / JCM 5825 / NCTC 11152).